The following is a 426-amino-acid chain: Serine hydroxymethyltransferase (426 aa).

Residues leucine 115 and 119-121 (GHI) contribute to the (6S)-5,6,7,8-tetrahydrofolate site. The residue at position 225 (lysine 225) is an N6-(pyridoxal phosphate)lysine.

The protein belongs to the SHMT family. Homodimer. Requires pyridoxal 5'-phosphate as cofactor.

The protein resides in the cytoplasm. It participates in amino-acid biosynthesis; glycine biosynthesis; glycine from L-serine: step 1/1. Functionally, catalyzes the reversible interconversion of serine and glycine with a modified folate serving as the one-carbon carrier. Also exhibits a pteridine-independent aldolase activity toward beta-hydroxyamino acids, producing glycine and aldehydes, via a retro-aldol mechanism. The protein is Serine hydroxymethyltransferase of Thermoplasma acidophilum (strain ATCC 25905 / DSM 1728 / JCM 9062 / NBRC 15155 / AMRC-C165).